The following is a 197-amino-acid chain: Na(+)-translocating NADH-quinone reductase subunit E (197 aa).

Transmembrane regions (helical) follow at residues 11-31 (SVFI…FLAV), 35-55 (VSTA…SVPA), 76-96 (FLKF…LEMF), 108-128 (LGIY…VSFM), 139-159 (VVYG…LAGI), and 175-195 (LGIT…FSGI).

This sequence belongs to the NqrDE/RnfAE family. Composed of six subunits; NqrA, NqrB, NqrC, NqrD, NqrE and NqrF.

It is found in the cell inner membrane. It catalyses the reaction a ubiquinone + n Na(+)(in) + NADH + H(+) = a ubiquinol + n Na(+)(out) + NAD(+). Its function is as follows. NQR complex catalyzes the reduction of ubiquinone-1 to ubiquinol by two successive reactions, coupled with the transport of Na(+) ions from the cytoplasm to the periplasm. NqrA to NqrE are probably involved in the second step, the conversion of ubisemiquinone to ubiquinol. This is Na(+)-translocating NADH-quinone reductase subunit E from Neisseria meningitidis serogroup A / serotype 4A (strain DSM 15465 / Z2491).